Consider the following 448-residue polypeptide: MSFTPGKQSSSRASFGNRSGNGILKWADQSDQSRNVQTRGRRAQPKQTATSQLPSGGNVVPYYSWFSGITQFQKGKEFEFAEGQGVPIAPGVPATEAKGYWYRHNRRSFKTADGNQRQLLPRWYFYYLGTGPHAKDQYGTDIDGVFWVASNQADVNTPADILDRDPSSDEAIPTRFPPGTVLPQGYYIEGSGRSAPNSRSTSRASSRASSAGSRSRANSGNRTPTSGVTPDMADQIASLVLAKLGKDATKPQQVTKQTAKEIRQKILNKPRQKRSPNKQCTVQQCFGKRGPNQNFGGGEMLKLGTSDPQFPILAELAPTAGAFFFGSRLELAKVQNLSGNLDEPQKDVYELRYNGAIRFDSTLSGFETIMKVLNENLNAYQQQDGMMNMSPKPQRQRGQKNGQGENDNISVAAPKSRVQQNKSRELTAEDISLLKKMDEPYTEDTSEI.

3 stretches are compositionally biased toward polar residues: residues 1 to 20 (MSFTPGKQSSSRASFGNRSG), 29 to 38 (QSDQSRNVQT), and 45 to 55 (PKQTATSQLPS). Positions 1–55 (MSFTPGKQSSSRASFGNRSGNGILKWADQSDQSRNVQTRGRRAQPKQTATSQLPS) are disordered. Residues 52–194 (QLPSGGNVVP…GYYIEGSGRS (143 aa)) are RNA-binding. The 130-residue stretch at 61–190 (PYYSWFSGIT…VLPQGYYIEG (130 aa)) folds into the CoV N NTD domain. RNA is bound by residues arginine 106, arginine 122, and arginine 164. Disordered stretches follow at residues 157-231 (TPAD…VTPD), 266-297 (ILNKPRQKRSPNKQCTVQQCFGKRGPNQNFGG), and 385-448 (GMMN…TSEI). Serine 167 is subject to Phosphoserine; by host. Phosphothreonine; by host is present on threonine 174. Serine 191 is modified (phosphoserine; by host). Low complexity predominate over residues 193-223 (RSAPNSRSTSRASSRASSAGSRSRANSGNRT). A CoV N CTD domain is found at 259–384 (AKEIRQKILN…ENLNAYQQQD (126 aa)). Residues 266-276 (ILNKPRQKRSP) show a composition bias toward basic residues. The segment at 266-384 (ILNKPRQKRS…ENLNAYQQQD (119 aa)) is dimerization. The residue at position 390 (serine 390) is a Phosphoserine; by host. Polar residues predominate over residues 399 to 409 (QKNGQGENDNI). The segment covering 422–439 (KSRELTAEDISLLKKMDE) has biased composition (basic and acidic residues). Serine 423 carries the phosphoserine; by host modification. Threonine 427 bears the Phosphothreonine; by host mark.

The protein belongs to the betacoronavirus nucleocapsid protein family. As to quaternary structure, homooligomer. Both monomeric and oligomeric forms interact with RNA. Interacts with protein M. Interacts with NSP3; this interaction serves to tether the genome to the newly translated replicase-transcriptase complex at a very early stage of infection. ADP-ribosylated. The ADP-ribosylation is retained in the virion during infection. Post-translationally, phosphorylated on serine and threonine residues.

The protein resides in the virion. It localises to the host endoplasmic reticulum-Golgi intermediate compartment. Its subcellular location is the host Golgi apparatus. Packages the positive strand viral genome RNA into a helical ribonucleocapsid (RNP) and plays a fundamental role during virion assembly through its interactions with the viral genome and membrane protein M. Plays an important role in enhancing the efficiency of subgenomic viral RNA transcription as well as viral replication. The polypeptide is Nucleoprotein (Bos taurus (Bovine)).